The following is a 235-amino-acid chain: MATVQKSQHSHFFLLVGCIVHLSNFCSTTTAQFDYFKLVLQWPNSYCSLKTTHCPRTRLPSQFTIHGLWPDNKSWPLSNCRDTSADVLKITDKGLIQDLAVHWPDLTRRQRKVPGQKFWVTQWKKHGACALPMYSFNDYFVKALELKKRNNVLDMLSRKSLTPGDQRVDVSDVNGAITKVTGGIAILKCPEGYLTEVIICFDPSGFPVIDCPGPFPCKDDPLEFQVLSRRKFQDL.

A signal peptide spans 1–31 (MATVQKSQHSHFFLLVGCIVHLSNFCSTTTA). Glutamine 41 contributes to the RNA binding site. Cysteine 47 and cysteine 54 are joined by a disulfide. Histidine 66 contacts RNA. Histidine 66 serves as the catalytic Proton donor. Residue asparagine 72 is glycosylated (N-linked (GlcNAc...) asparagine). Cystine bridges form between cysteine 80-cysteine 129, cysteine 189-cysteine 217, and cysteine 200-cysteine 211. RNA contacts are provided by residues 105–106 (DL), arginine 108, and phenylalanine 118. The active site involves glutamine 122. 125-126 (KH) serves as a coordination point for RNA. Histidine 126 serves as the catalytic Proton acceptor.

Belongs to the RNase T2 family.

The protein resides in the secreted. The protein localises to the extracellular space. It catalyses the reaction a ribonucleotidyl-ribonucleotide-RNA + H2O = a 3'-end 3'-phospho-ribonucleotide-RNA + a 5'-end dephospho-ribonucleoside-RNA + H(+). Its function is as follows. Self-incompatibility (SI) is the inherited ability of a flowering plant to prevent self-fertilization by discriminating between self and non-self pollen during pollination. In many species, self-incompatibility is controlled by the single, multiallelic locus S. In Antirrhinum hispanicum (Snapdragon), this protein is Ribonuclease S-2 (S2).